Consider the following 310-residue polypeptide: Protein-L-isoaspartate O-methyltransferase (310 aa).

Disordered stretches follow at residues 1–46 and 60–79; these read MSGE…DKPA and ALPG…TVLK. The segment covering 14–34 has biased composition (basic and acidic residues); sequence EDLKRAPRKSEVRSGSGERHA. Positions 35-46 are enriched in low complexity; the sequence is ASAVPKAADKPA. Ser157 is an active-site residue.

This sequence belongs to the methyltransferase superfamily. L-isoaspartyl/D-aspartyl protein methyltransferase family.

Its subcellular location is the cytoplasm. The catalysed reaction is [protein]-L-isoaspartate + S-adenosyl-L-methionine = [protein]-L-isoaspartate alpha-methyl ester + S-adenosyl-L-homocysteine. Its function is as follows. Catalyzes the methyl esterification of L-isoaspartyl residues in peptides and proteins that result from spontaneous decomposition of normal L-aspartyl and L-asparaginyl residues. It plays a role in the repair and/or degradation of damaged proteins. This chain is Protein-L-isoaspartate O-methyltransferase, found in Burkholderia ambifaria (strain ATCC BAA-244 / DSM 16087 / CCUG 44356 / LMG 19182 / AMMD) (Burkholderia cepacia (strain AMMD)).